The following is a 51-amino-acid chain: Large ribosomal subunit protein eL39 (51 aa).

A disordered region spans residues 32–51; it reads KRRVTRSPTRRHWRRVKLKA.

Belongs to the eukaryotic ribosomal protein eL39 family.

The protein is Large ribosomal subunit protein eL39 of Pyrobaculum arsenaticum (strain DSM 13514 / JCM 11321 / PZ6).